The following is a 245-amino-acid chain: Leucyl/phenylalanyl-tRNA--protein transferase (245 aa).

This sequence belongs to the L/F-transferase family.

It is found in the cytoplasm. It catalyses the reaction N-terminal L-lysyl-[protein] + L-leucyl-tRNA(Leu) = N-terminal L-leucyl-L-lysyl-[protein] + tRNA(Leu) + H(+). The catalysed reaction is N-terminal L-arginyl-[protein] + L-leucyl-tRNA(Leu) = N-terminal L-leucyl-L-arginyl-[protein] + tRNA(Leu) + H(+). It carries out the reaction L-phenylalanyl-tRNA(Phe) + an N-terminal L-alpha-aminoacyl-[protein] = an N-terminal L-phenylalanyl-L-alpha-aminoacyl-[protein] + tRNA(Phe). Functions in the N-end rule pathway of protein degradation where it conjugates Leu, Phe and, less efficiently, Met from aminoacyl-tRNAs to the N-termini of proteins containing an N-terminal arginine or lysine. In Paraburkholderia phytofirmans (strain DSM 17436 / LMG 22146 / PsJN) (Burkholderia phytofirmans), this protein is Leucyl/phenylalanyl-tRNA--protein transferase.